An 89-amino-acid chain; its full sequence is Cell division topological specificity factor (89 aa).

It belongs to the MinE family.

Its function is as follows. Prevents the cell division inhibition by proteins MinC and MinD at internal division sites while permitting inhibition at polar sites. This ensures cell division at the proper site by restricting the formation of a division septum at the midpoint of the long axis of the cell. This is Cell division topological specificity factor from Pectobacterium atrosepticum (strain SCRI 1043 / ATCC BAA-672) (Erwinia carotovora subsp. atroseptica).